The following is a 576-amino-acid chain: Malonate--CoA ligase ACSF3, mitochondrial (576 aa).

A mitochondrion-targeting transit peptide spans 1 to 83 (MLPHVVLTFR…RSLRLSQEIC (83 aa)). ATP-binding positions include 202–210 (TSGTTGRPK), D457, R471, and K563.

The protein belongs to the ATP-dependent AMP-binding enzyme family.

It localises to the mitochondrion. The enzyme catalyses tetracosanoate + ATP + CoA = tetracosanoyl-CoA + AMP + diphosphate. It catalyses the reaction malonate + ATP + CoA = malonyl-CoA + AMP + diphosphate. Catalyzes the initial reaction in intramitochondrial fatty acid synthesis, by activating malonate and methylmalonate, but not acetate, into their respective CoA thioester. May have some preference toward very-long-chain substrates. The polypeptide is Malonate--CoA ligase ACSF3, mitochondrial (Homo sapiens (Human)).